A 197-amino-acid polypeptide reads, in one-letter code: Phosphoheptose isomerase (197 aa).

Residues 36–197 (MVNALLNEGK…IDSQLFGSEE (162 aa)) form the SIS domain. Position 51–53 (51–53 (NGG)) interacts with substrate. Histidine 60 and glutamate 64 together coordinate Zn(2+). Residues glutamate 64, 93–94 (ND), 119–121 (STS), serine 124, and glutamine 174 contribute to the substrate site. Zn(2+) contacts are provided by glutamine 174 and histidine 182.

The protein belongs to the SIS family. GmhA subfamily. Homotetramer. Zn(2+) serves as cofactor.

The protein localises to the cytoplasm. It catalyses the reaction 2 D-sedoheptulose 7-phosphate = D-glycero-alpha-D-manno-heptose 7-phosphate + D-glycero-beta-D-manno-heptose 7-phosphate. The protein operates within carbohydrate biosynthesis; D-glycero-D-manno-heptose 7-phosphate biosynthesis; D-glycero-alpha-D-manno-heptose 7-phosphate and D-glycero-beta-D-manno-heptose 7-phosphate from sedoheptulose 7-phosphate: step 1/1. Functionally, catalyzes the isomerization of sedoheptulose 7-phosphate in D-glycero-D-manno-heptose 7-phosphate. The polypeptide is Phosphoheptose isomerase (Pseudomonas fluorescens (strain Pf0-1)).